The primary structure comprises 335 residues: Mitochondrial thiamine diphosphate carrier 1 (335 aa).

6 consecutive transmembrane segments (helical) span residues 13–29 (KRAV…GAIS), 88–105 (VPAL…FAVL), 127–150 (YLSY…FDLL), 182–199 (LYAG…YAGL), 231–247 (SLSS…SGTV), and 304–323 (GIVP…FVAY). Solcar repeat units follow at residues 13–111 (KRAV…VKSF), 124–210 (LSPY…FKRW), and 232–329 (LSSF…ASDW).

Belongs to the mitochondrial carrier (TC 2.A.29) family.

It is found in the mitochondrion inner membrane. Functionally, mitochondrial transporter that mediates uptake of thiamine diphosphate (ThDP) into mitochondria. This is Mitochondrial thiamine diphosphate carrier 1 from Arabidopsis thaliana (Mouse-ear cress).